Consider the following 535-residue polypeptide: Flavin-containing monooxygenase iboF (535 aa).

Residues 1–24 (MFSLRPTALVSLSVVLFSIQETLS) form the signal peptide. 60 to 65 (GAGPSG) is a binding site for FAD. N-linked (GlcNAc...) asparagine glycans are attached at residues Asn134, Asn243, and Asn300. An NADP(+)-binding site is contributed by 307 to 312 (GAAASG). N-linked (GlcNAc...) asparagine glycans are attached at residues Asn356, Asn382, and Asn410.

Belongs to the FMO family. FAD serves as cofactor.

It functions in the pathway secondary metabolite biosynthesis. Its function is as follows. Flavin-containing monooxygenase; part of the gene cluster that mediates the biosynthesis of the psychoactive metabolites ibotenic acid and muscimol. The first committed step is glutamate hydroxylation by the 2-oxoglutarate-dependent dioxygenase iboH, and the last step is decarboxylation of ibotenic acid to muscimol by the decarboxylase iboD. The order of the intermediate reactions is somewhat ambiguous. IboA likely activates the carboxylic acid at position 5 to introduce an amide bond, and the flavin monooxygenase iboF generates the N-O bond. There are several options for the latter step. One option is that iboF directly hydroxylates the amide nitrogen formed by iboA to produce a hydroxamic acid species. Another option is that iboF hydroxylates an external N-containing compound, whose resulting N-O bond is subsequently introduced into the hydroxyglutamate scaffold. The paralogous PLP-dependent cystathionine gamma-synthase-like enzymes iboG1 and iboG2 are likely involved in substitution of the OH group at position 3 by the O-N moiety. The first cyclic intermediate is most probably tricholomic acid which is likely desaturated to ibotenic acid by the cytochrome P450 monooxygenase iboC. This Amanita muscaria (strain Koide BX008) protein is Flavin-containing monooxygenase iboF.